The primary structure comprises 363 residues: Chorismate synthase (363 aa).

A disordered region spans residues 36–58 (SESDIQGDLDRRRPGQSKITTPR). Residue Arg47 coordinates NADP(+). Residues 124–126 (RSS), Gly286, 301–305 (KPTAT), and Arg327 each bind FMN.

Belongs to the chorismate synthase family. Homotetramer. The cofactor is FMNH2.

It carries out the reaction 5-O-(1-carboxyvinyl)-3-phosphoshikimate = chorismate + phosphate. Its pathway is metabolic intermediate biosynthesis; chorismate biosynthesis; chorismate from D-erythrose 4-phosphate and phosphoenolpyruvate: step 7/7. Functionally, catalyzes the anti-1,4-elimination of the C-3 phosphate and the C-6 proR hydrogen from 5-enolpyruvylshikimate-3-phosphate (EPSP) to yield chorismate, which is the branch point compound that serves as the starting substrate for the three terminal pathways of aromatic amino acid biosynthesis. This reaction introduces a second double bond into the aromatic ring system. In Crocosphaera subtropica (strain ATCC 51142 / BH68) (Cyanothece sp. (strain ATCC 51142)), this protein is Chorismate synthase.